We begin with the raw amino-acid sequence, 211 residues long: Mediator of RNA polymerase II transcription subunit 20 (211 aa).

The protein belongs to the Mediator complex subunit 20 family. As to quaternary structure, component of the Mediator complex.

The protein localises to the nucleus. Component of the Mediator complex, a coactivator involved in the regulated transcription of nearly all RNA polymerase II-dependent genes. Mediator functions as a bridge to convey information from gene-specific regulatory proteins to the basal RNA polymerase II transcription machinery. Mediator is recruited to promoters by direct interactions with regulatory proteins and serves as a scaffold for the assembly of a functional preinitiation complex with RNA polymerase II and the general transcription factors. This is Mediator of RNA polymerase II transcription subunit 20 (med20) from Xenopus laevis (African clawed frog).